A 167-amino-acid polypeptide reads, in one-letter code: Phosphopantetheine adenylyltransferase (167 aa).

Residue Thr-10 participates in substrate binding. ATP contacts are provided by residues 10 to 11 (TF) and His-18. Substrate-binding residues include Ala-77 and Arg-91. Residues 92–94 (GLR), Glu-102, and 127–133 (YSFISSS) each bind ATP.

This sequence belongs to the bacterial CoaD family. As to quaternary structure, homohexamer. It depends on Mg(2+) as a cofactor.

It localises to the cytoplasm. The enzyme catalyses (R)-4'-phosphopantetheine + ATP + H(+) = 3'-dephospho-CoA + diphosphate. It functions in the pathway cofactor biosynthesis; coenzyme A biosynthesis; CoA from (R)-pantothenate: step 4/5. Functionally, reversibly transfers an adenylyl group from ATP to 4'-phosphopantetheine, yielding dephospho-CoA (dPCoA) and pyrophosphate. This Thermomicrobium roseum (strain ATCC 27502 / DSM 5159 / P-2) protein is Phosphopantetheine adenylyltransferase.